A 121-amino-acid chain; its full sequence is MIDLDTLKFDGNGLIGAIAQDNRTGEVLMFAFMNREALEKTIETGIAHYWSRSRQKLWKKGESSGHMQKVHELLIDCDMDAIILKISQEGGACHTGYRSCFYRNIEGDVVGEKVFDPADVY.

Mg(2+) is bound at residue aspartate 76. Residue cysteine 77 coordinates Zn(2+). Positions 78 and 80 each coordinate Mg(2+). Cysteine 93 and cysteine 100 together coordinate Zn(2+).

It belongs to the PRA-CH family. As to quaternary structure, homodimer. Mg(2+) serves as cofactor. Zn(2+) is required as a cofactor.

The protein localises to the cytoplasm. It catalyses the reaction 1-(5-phospho-beta-D-ribosyl)-5'-AMP + H2O = 1-(5-phospho-beta-D-ribosyl)-5-[(5-phospho-beta-D-ribosylamino)methylideneamino]imidazole-4-carboxamide. The protein operates within amino-acid biosynthesis; L-histidine biosynthesis; L-histidine from 5-phospho-alpha-D-ribose 1-diphosphate: step 3/9. Catalyzes the hydrolysis of the adenine ring of phosphoribosyl-AMP. In Methanococcoides burtonii (strain DSM 6242 / NBRC 107633 / OCM 468 / ACE-M), this protein is Phosphoribosyl-AMP cyclohydrolase.